We begin with the raw amino-acid sequence, 177 residues long: 2''-aminoglycoside nucleotidyltransferase (177 aa).

The interval Met1 to Trp92 is N-terminal domain. Residues Asp44, Asp46, and Asp86 each coordinate Mg(2+). Asp86 functions as the Proton acceptor in the catalytic mechanism. The tract at residues Ala93–Ala177 is C-terminal domain. Ala100 is a kanamycin A binding site.

Monomer. It depends on Mg(2+) as a cofactor.

The enzyme catalyses nucleoside triphosphate + gentamicin = diphosphate + 2''-nucleotidylgentamicin.. Mediates bacterial resistance to kanamycin, gentamicin, dibekacin, sisomicin and tobramycin by adenylating the 2''-hydroxyl group of these antibiotics. The chain is 2''-aminoglycoside nucleotidyltransferase from Klebsiella pneumoniae.